The chain runs to 89 residues: Small ribosomal subunit protein uS15 (89 aa).

This sequence belongs to the universal ribosomal protein uS15 family. Part of the 30S ribosomal subunit. Forms a bridge to the 50S subunit in the 70S ribosome, contacting the 23S rRNA.

Its function is as follows. One of the primary rRNA binding proteins, it binds directly to 16S rRNA where it helps nucleate assembly of the platform of the 30S subunit by binding and bridging several RNA helices of the 16S rRNA. Forms an intersubunit bridge (bridge B4) with the 23S rRNA of the 50S subunit in the ribosome. This is Small ribosomal subunit protein uS15 from Chlorobaculum tepidum (strain ATCC 49652 / DSM 12025 / NBRC 103806 / TLS) (Chlorobium tepidum).